The primary structure comprises 767 residues: General transcription and DNA repair factor IIH helicase/translocase subunit XPB1 (767 aa).

Residues 1-51 (MGNGERGRPNKKMKYGGKDDQKMKNIQNAEDYYDDADEDSRDGEGEEKKRD) form a disordered region. The segment covering 31-41 (DYYDDADEDSR) has biased composition (acidic residues). The span at 42 to 51 (DGEGEEKKRD) shows a compositional bias: basic and acidic residues. The Helicase ATP-binding domain maps to 293–455 (MFGNGRARSG…DLNFLIGPKL (163 aa)). Residue 306–313 (LPCGAGKS) coordinates ATP. The DEVH box motif lies at 408–411 (DEVH). The Helicase C-terminal domain occupies 510 to 676 (RACEFLIRFH…SLPPPDAGSS (167 aa)). Positions 742–767 (RHKSGQQFKKPKDPTKRHNLFKKRYV) are disordered. The Nuclear localization signal motif lies at 750 to 766 (KKPKDPTKRHNLFKKRY). Residues 758–767 (RHNLFKKRYV) are compositionally biased toward basic residues.

Belongs to the helicase family. RAD25/XPB subfamily. Component of the 7-subunit TFIIH core complex composed of XPB, XPD, TFB1/GTF2H1, GTF2H2/P44, TFB4/GTF2H3, TFB2/GTF2H4 and TFB5/GTF2H5, which is active in NER. The core complex associates with the 3-subunit CDK-activating kinase (CAK) module composed of CYCH1/cyclin H1, CDKD and MAT1/At4g30820 to form the 10-subunit holoenzyme (holo-TFIIH) active in transcription. In terms of tissue distribution, expressed ubiquitously.

It localises to the nucleus. It catalyses the reaction Couples ATP hydrolysis with the unwinding of duplex DNA by translocating in the 3'-5' direction.. The catalysed reaction is ATP + H2O = ADP + phosphate + H(+). ATP-dependent 3'-5' DNA helicase/translocase; binds dsDNA rather than ssDNA, unzipping it in a translocase rather than classical helicase activity. Component of the general transcription and DNA repair factor IIH (TFIIH) core complex. When complexed to CDK-activating kinase (CAK), involved in RNA transcription by RNA polymerase II. The ATPase activity of XPB/ERCC3, but not its helicase activity, is required for DNA opening; it may wrap around the damaged DNA wedging it open, causing localized melting and twisting that allows XPD/ERCC2 helicase to anchor. The ATP-dependent helicase activity of XPB/ERCC3 may be required for promoter escape. Also involved in transcription-coupled nucleotide excision repair (NER) of damaged DNA. In NER, TFIIH acts by opening DNA around the lesion to allow the excision of the damaged oligonucleotide and its replacement by a new DNA fragment. The structure of the TFIIH transcription complex differs from the NER-TFIIH complex. Partially complements UV sensitivity of a yeast SSL2 mutation. Required during the early stages of development, including seed germination. This is General transcription and DNA repair factor IIH helicase/translocase subunit XPB1 (XPB1) from Arabidopsis thaliana (Mouse-ear cress).